A 227-amino-acid chain; its full sequence is PKHD-type hydroxylase BURPS668_A1690 (227 aa).

Residues 78–178 (KVFPPLFNRY…RVASFFWIQS (101 aa)) form the Fe2OG dioxygenase domain. Positions 96, 98, and 159 each coordinate Fe cation. Residue Arg169 participates in 2-oxoglutarate binding.

It depends on Fe(2+) as a cofactor. Requires L-ascorbate as cofactor.

The chain is PKHD-type hydroxylase BURPS668_A1690 from Burkholderia pseudomallei (strain 668).